We begin with the raw amino-acid sequence, 383 residues long: L-lactate dehydrogenase (383 aa).

Residues 1–380 form the FMN hydroxy acid dehydrogenase domain; sequence MIVSSTTDFR…NETILAERVP (380 aa). Substrate is bound at residue Tyr-24. 2 residues coordinate FMN: Ser-106 and Gln-127. Position 129 (Tyr-129) interacts with substrate. Thr-155 lines the FMN pocket. Arg-164 provides a ligand contact to substrate. Position 251 (Lys-251) interacts with FMN. His-275 acts as the Proton acceptor in catalysis. Residue Arg-278 coordinates substrate. Residue 306 to 330 coordinates FMN; sequence DGGVRSGLDVVRMLALGARGVLIGR.

This sequence belongs to the FMN-dependent alpha-hydroxy acid dehydrogenase family. It depends on FMN as a cofactor.

The protein resides in the cell inner membrane. It carries out the reaction (S)-lactate + A = pyruvate + AH2. Functionally, catalyzes the conversion of L-lactate to pyruvate. Is coupled to the respiratory chain. The sequence is that of L-lactate dehydrogenase from Caulobacter vibrioides (strain ATCC 19089 / CIP 103742 / CB 15) (Caulobacter crescentus).